Here is a 305-residue protein sequence, read N- to C-terminus: Dihydroorotate dehydrogenase B (NAD(+)), catalytic subunit (305 aa).

Residues Ser21 and 45–46 (KA) contribute to the FMN site. Substrate contacts are provided by residues Lys45 and 69-73 (NAIGL). 2 residues coordinate FMN: Asn99 and Asn127. Asn127 is a binding site for substrate. Cys130 acts as the Nucleophile in catalysis. FMN is bound by residues Lys165 and Ile190. 191–192 (NT) is a substrate binding site. Residues Gly216, 242-243 (GG), and 264-265 (GT) each bind FMN.

The protein belongs to the dihydroorotate dehydrogenase family. Type 1 subfamily. As to quaternary structure, heterotetramer of 2 PyrK and 2 PyrD type B subunits. FMN serves as cofactor.

It is found in the cytoplasm. It carries out the reaction (S)-dihydroorotate + NAD(+) = orotate + NADH + H(+). It participates in pyrimidine metabolism; UMP biosynthesis via de novo pathway; orotate from (S)-dihydroorotate (NAD(+) route): step 1/1. Catalyzes the conversion of dihydroorotate to orotate with NAD(+) as electron acceptor. This chain is Dihydroorotate dehydrogenase B (NAD(+)), catalytic subunit (pyrD), found in Staphylococcus carnosus (strain TM300).